The sequence spans 65 residues: Large ribosomal subunit protein bL28 (65 aa).

The disordered stretch occupies residues 1–21 (MPGRDQLTGQKALSGNKRSHA).

Belongs to the bacterial ribosomal protein bL28 family.

In Metamycoplasma arthritidis (strain 158L3-1) (Mycoplasma arthritidis), this protein is Large ribosomal subunit protein bL28.